Here is a 729-residue protein sequence, read N- to C-terminus: MLYKGDTLYLDWLEDGIAELVFDAPGSVNKLDTATVASLGEAIGVLEQQSDLKGLLLRSNKAAFIVGADITEFLSLFLVPEEQLSQWLHFANSVFNRLEDLPVPTIAAVNGYALGGGCECVLATDYRLATPDLRIGLPETKLGIMPGFGGSVRMPRMLGADSALEIIAAGKDVGADQALKIGLVDGVVKAEKLVEGAKAVLRQAINGDLDWKAKRQPKLEPLKLSKIEATMSFTIAKGMVAQTAGKHYPAPITAVKTIEAAARFGREEALNLENKSFVPLAHTNEARALVGIFLNDQYVKGKAKKLTKDVETPKQAAVLGAGIMGGGIAYQSAWKGVPVVMKDINDKSLTLGMTEAAKLLNKQLERGKIDGLKLAGVISTIHPTLDYAGFDRVDVVVEAVVENPKVKKAVLAETEQKVRPDTVLASNTSTIPISELANALERPENFCGMHFFNPVHRMPLVEIIRGEKSSDETIAKVVAWASKMGKTPIVVNDCPGFFVNRVLFPYFAGFSQLLRDGADFRKIDKVMEKQFGWPMGPAYLLDVVGIDTAHHAQAVMAAGFPQRMQKDYRDAIDALFDANRFGQKNGLGFWRYKEDSKGKPKKEEDAAVEDLLAEVSQPKRDFSEEEIIARMMIPMVNEVVRCLEEGIIATPAEADMALVYGLGFPPFHGGAFRWLDTLGSAKYLDMAQQYQHLGPLYEVPEGLRNKARHNEPYYPPVEPARPVGDLKTA.

An enoyl-CoA hydratase/isomerase region spans residues 1-189 (MLYKGDTLYL…KIGLVDGVVK (189 aa)). Asp296 contacts substrate. The interval 311–729 (ETPKQAAVLG…ARPVGDLKTA (419 aa)) is 3-hydroxyacyl-CoA dehydrogenase. Residues Met324, Asp343, 400 to 402 (VVE), Lys407, and Ser429 each bind NAD(+). The For 3-hydroxyacyl-CoA dehydrogenase activity role is filled by His450. Asn453 is a binding site for NAD(+). Residues Asn500 and Tyr660 each contribute to the substrate site. The interval 708-729 (RHNEPYYPPVEPARPVGDLKTA) is disordered.

The protein in the N-terminal section; belongs to the enoyl-CoA hydratase/isomerase family. In the C-terminal section; belongs to the 3-hydroxyacyl-CoA dehydrogenase family. Heterotetramer of two alpha chains (FadB) and two beta chains (FadA).

The catalysed reaction is a (3S)-3-hydroxyacyl-CoA + NAD(+) = a 3-oxoacyl-CoA + NADH + H(+). It carries out the reaction a (3S)-3-hydroxyacyl-CoA = a (2E)-enoyl-CoA + H2O. The enzyme catalyses a 4-saturated-(3S)-3-hydroxyacyl-CoA = a (3E)-enoyl-CoA + H2O. It catalyses the reaction (3S)-3-hydroxybutanoyl-CoA = (3R)-3-hydroxybutanoyl-CoA. The catalysed reaction is a (3Z)-enoyl-CoA = a 4-saturated (2E)-enoyl-CoA. It carries out the reaction a (3E)-enoyl-CoA = a 4-saturated (2E)-enoyl-CoA. It functions in the pathway lipid metabolism; fatty acid beta-oxidation. In terms of biological role, involved in the aerobic and anaerobic degradation of long-chain fatty acids via beta-oxidation cycle. Catalyzes the formation of 3-oxoacyl-CoA from enoyl-CoA via L-3-hydroxyacyl-CoA. It can also use D-3-hydroxyacyl-CoA and cis-3-enoyl-CoA as substrate. This Escherichia coli O8 (strain IAI1) protein is Fatty acid oxidation complex subunit alpha.